A 442-amino-acid polypeptide reads, in one-letter code: Lipoyl synthase, apicoplast (442 aa).

Positions 1–23 (MRVLTPSLYIYAFFIFCVRFKCG) are cleaved as a signal peptide. The disordered stretch occupies residues 104 to 154 (LGEHQLKGKRKESATNVEKEKKEKEQQEERLPVPKVGNKMPEKKPDWFHVP). A compositionally biased stretch (basic and acidic residues) spans 114–135 (KESATNVEKEKKEKEQQEERLP). 7 residues coordinate [4Fe-4S] cluster: C177, C182, C188, C203, C207, C210, and S418. Residues 189–407 (WNIGTATIML…KEEGMKMGFK (219 aa)) form the Radical SAM core domain.

The protein belongs to the radical SAM superfamily. Lipoyl synthase family. [4Fe-4S] cluster is required as a cofactor.

It localises to the plastid. It is found in the apicoplast. It carries out the reaction [[Fe-S] cluster scaffold protein carrying a second [4Fe-4S](2+) cluster] + N(6)-octanoyl-L-lysyl-[protein] + 2 oxidized [2Fe-2S]-[ferredoxin] + 2 S-adenosyl-L-methionine + 4 H(+) = [[Fe-S] cluster scaffold protein] + N(6)-[(R)-dihydrolipoyl]-L-lysyl-[protein] + 4 Fe(3+) + 2 hydrogen sulfide + 2 5'-deoxyadenosine + 2 L-methionine + 2 reduced [2Fe-2S]-[ferredoxin]. Its pathway is protein modification; protein lipoylation via endogenous pathway; protein N(6)-(lipoyl)lysine from octanoyl-[acyl-carrier-protein]: step 2/2. In terms of biological role, catalyzes the radical-mediated insertion of two sulfur atoms into the C-6 and C-8 positions of the octanoyl moiety bound to the lipoyl domains of lipoate-dependent enzymes, thereby converting the octanoylated domains into lipoylated derivatives. The chain is Lipoyl synthase, apicoplast from Plasmodium knowlesi (strain H).